The sequence spans 590 residues: Acetolactate synthase large subunit (590 aa).

Glutamate 61 is a binding site for thiamine diphosphate. FAD is bound by residues arginine 163, 271–292, and 314–333; these read HGTA…LGAR and DIDP…IVGD. Positions 405–484 are thiamine pyrophosphate binding; it reads QHQMWSAQFL…IKIVIINNRW (80 aa). Positions 455 and 482 each coordinate Mg(2+).

It belongs to the TPP enzyme family. Dimer of large and small chains. Requires Mg(2+) as cofactor. The cofactor is thiamine diphosphate.

It localises to the plastid. It is found in the chloroplast. It catalyses the reaction 2 pyruvate + H(+) = (2S)-2-acetolactate + CO2. Its pathway is amino-acid biosynthesis; L-isoleucine biosynthesis; L-isoleucine from 2-oxobutanoate: step 1/4. The protein operates within amino-acid biosynthesis; L-valine biosynthesis; L-valine from pyruvate: step 1/4. This is Acetolactate synthase large subunit (ilvB) from Porphyra purpurea (Red seaweed).